We begin with the raw amino-acid sequence, 1447 residues long: Netrin receptor DCC (1447 aa).

An N-terminal signal peptide occupies residues 1-25; sequence MENSLRCVWVPKLAFVLFGASLFSA. 4 Ig-like C2-type domains span residues 26–135, 139–229, 234–326, and 331–416; these read HLQV…AKVA, PLRF…AEVR, PGLH…AELT, and PWFL…AQLI. At 26-1097 the chain is on the extracellular side; that stretch reads HLQVTGFQIK…GSVTPQKNSN (1072 aa). Cystine bridges form between cysteine 61–cysteine 117, cysteine 161–cysteine 212, and cysteine 261–cysteine 310. Asparagine 94 carries an N-linked (GlcNAc...) asparagine glycan. N-linked (GlcNAc...) asparagine glycosylation is found at asparagine 299 and asparagine 318. A disulfide bond links cysteine 352 and cysteine 400. Fibronectin type-III domains follow at residues 431–524, 530–620, 625–718, 728–821, 846–942, and 947–1044; these read APRD…TQPE, PVEN…TLSD, PPQN…TPEN, QPSS…TDPT, PPVG…TYEA, and APKD…TLKV. Asparagine 478 carries N-linked (GlcNAc...) asparagine glycosylation. N-linked (GlcNAc...) asparagine glycans are attached at residues asparagine 628 and asparagine 702. A helical membrane pass occupies residues 1098 to 1122; the sequence is LLVIIVVTVGVITVLVVVIVAVICT. Residues 1123–1447 lie on the Cytoplasmic side of the membrane; sequence RRSSAQQRKK…QLNAITGSAF (325 aa). Disordered stretches follow at residues 1126 to 1152 and 1165 to 1222; these read SAQQ…RPPD and IEKP…TLER. The segment covering 1129 to 1143 has biased composition (basic residues); that stretch reads QRKKRATHSAGKRKG. Phosphoserine; by MAPK1 is present on serine 1178. The segment covering 1179-1221 has biased composition (polar residues); the sequence is PIQSCQDLTPVSHSQSETQLGSKSTSHSGQDTEEAGSSMSTLE. Residue threonine 1187 is modified to Phosphothreonine; by MAPK1. Serine 1267 is modified (phosphoserine; by MAPK1). 2 disordered regions span residues 1288-1330 and 1394-1419; these read SVDR…PSRT and LLPV…SANV. The span at 1297–1310 shows a compositional bias: polar residues; it reads RSQSVSEGPTTQQP. An interaction with MYO10 region spans residues 1432–1439; the sequence is LEGLMKQL.

This sequence belongs to the immunoglobulin superfamily. DCC family. As to quaternary structure, interacts with the cytoplasmic part of UNC5A, UNC5B, UNC5C and probably UNC5D. Interacts with DSCAM. Interacts with PTK2/FAK1 and MAPK1. Interacts with NTN1. Interacts with MYO10. Interacts with CBLN4; this interaction can be competed by NTN1. Interacts with SIAH1 and SIAH2. Ubiquitinated; mediated by SIAH1 or SIAH2 and leading to its subsequent proteasomal degradation. In terms of tissue distribution, found in axons of the central and peripheral nervous system and in differentiated cell types of the intestine. Not expressed in colorectal tumor cells that lost their capacity to differentiate into mucus producing cells.

The protein localises to the membrane. Receptor for netrin required for axon guidance. Mediates axon attraction of neuronal growth cones in the developing nervous system upon ligand binding. Its association with UNC5 proteins may trigger signaling for axon repulsion. It also acts as a dependence receptor required for apoptosis induction when not associated with netrin ligand. Implicated as a tumor suppressor gene. The chain is Netrin receptor DCC (DCC) from Homo sapiens (Human).